The sequence spans 307 residues: Acetaldehyde dehydrogenase 1 (307 aa).

C132 (acyl-thioester intermediate) is an active-site residue. NAD(+) is bound by residues S163–N171 and N274.

The protein belongs to the acetaldehyde dehydrogenase family.

The catalysed reaction is acetaldehyde + NAD(+) + CoA = acetyl-CoA + NADH + H(+). The protein is Acetaldehyde dehydrogenase 1 (tesF) of Comamonas testosteroni (Pseudomonas testosteroni).